We begin with the raw amino-acid sequence, 482 residues long: Adenylyltransferase and sulfurtransferase MOCS3-2 (482 aa).

Residues G125, D146, 153–157, K170, and 214–215 each bind ATP; these read NNLHR and DN. Positions 255 and 258 each coordinate Zn(2+). Residue C272 is the Glycyl thioester intermediate; for adenylyltransferase activity of the active site. Zn(2+) is bound by residues C330 and C333. The Rhodanese domain maps to 385 to 480; sequence DGEPHLLLDV…WGQDVDPDFP (96 aa). Catalysis depends on C440, which acts as the Cysteine persulfide intermediate; for sulfurtransferase activity.

The protein in the N-terminal section; belongs to the HesA/MoeB/ThiF family. UBA4 subfamily. Zn(2+) is required as a cofactor.

The protein localises to the cytoplasm. It carries out the reaction [molybdopterin-synthase sulfur-carrier protein]-C-terminal Gly-Gly + ATP + H(+) = [molybdopterin-synthase sulfur-carrier protein]-C-terminal Gly-Gly-AMP + diphosphate. It catalyses the reaction [molybdopterin-synthase sulfur-carrier protein]-C-terminal Gly-Gly-AMP + S-sulfanyl-L-cysteinyl-[cysteine desulfurase] + AH2 = [molybdopterin-synthase sulfur-carrier protein]-C-terminal-Gly-aminoethanethioate + L-cysteinyl-[cysteine desulfurase] + A + AMP + 2 H(+). It participates in tRNA modification; 5-methoxycarbonylmethyl-2-thiouridine-tRNA biosynthesis. Its pathway is cofactor biosynthesis; molybdopterin biosynthesis. Plays a central role in 2-thiolation of mcm(5)S(2)U at tRNA wobble positions of cytosolic tRNA(Lys), tRNA(Glu) and tRNA(Gln). Also essential during biosynthesis of the molybdenum cofactor. Acts by mediating the C-terminal thiocarboxylation of sulfur carriers URM1 and MOCS2A. Its N-terminus first activates URM1 and MOCS2A as acyl-adenylates (-COAMP), then the persulfide sulfur on the catalytic cysteine is transferred to URM1 and MOCS2A to form thiocarboxylation (-COSH) of their C-terminus. The reaction probably involves hydrogen sulfide that is generated from the persulfide intermediate and that acts as a nucleophile towards URM1 and MOCS2A. Subsequently, a transient disulfide bond is formed. Does not use thiosulfate as sulfur donor; NFS1 probably acting as a sulfur donor for thiocarboxylation reactions. The chain is Adenylyltransferase and sulfurtransferase MOCS3-2 from Zea mays (Maize).